Here is a 161-residue protein sequence, read N- to C-terminus: MAEVANNEQQAPQFNIQRVYTKDVSFETPNSPAVFQKEWNPEVKLDLDTRSAKLADDVYEVVLSLTVTAQNGGDTAFLCEVQQAGIFSITGLTEPQLAHSLGAYCPNFLFPYARETVGSLVGRGTFPQLNLAPVNFDALFAQYVQQRQAAATAPAAEEANA.

This sequence belongs to the SecB family. As to quaternary structure, homotetramer, a dimer of dimers. One homotetramer interacts with 1 SecA dimer.

It is found in the cytoplasm. Functionally, one of the proteins required for the normal export of preproteins out of the cell cytoplasm. It is a molecular chaperone that binds to a subset of precursor proteins, maintaining them in a translocation-competent state. It also specifically binds to its receptor SecA. This is Protein-export protein SecB from Shewanella baltica (strain OS155 / ATCC BAA-1091).